We begin with the raw amino-acid sequence, 510 residues long: Crotonobetaine/carnitine--CoA ligase (510 aa).

Belongs to the ATP-dependent AMP-binding enzyme family.

It carries out the reaction 4-(trimethylamino)butanoate + ATP + CoA = 4-(trimethylamino)butanoyl-CoA + AMP + diphosphate. It catalyses the reaction crotonobetaine + ATP + CoA = crotonobetainyl-CoA + AMP + diphosphate. The enzyme catalyses (R)-carnitine + ATP + CoA = (R)-carnitinyl-CoA + AMP + diphosphate. The protein operates within amine and polyamine metabolism; carnitine metabolism. Its function is as follows. Catalyzes the transfer of CoA to carnitine, generating the initial carnitinyl-CoA needed for the CaiB reaction cycle. Also has activity toward crotonobetaine and gamma-butyrobetaine. This is Crotonobetaine/carnitine--CoA ligase from Shigella flexneri serotype 5b (strain 8401).